The following is a 93-amino-acid chain: Cell division protein FtsB (93 aa).

At 1–3 the chain is on the cytoplasmic side; that stretch reads MRI. Residues 4 to 21 form a helical membrane-spanning segment; sequence FVIALTLLFGWLQYTLWF. Residues 22–93 are Periplasmic-facing; the sequence is GKNGVSDYYT…FYRIVDEEEH (72 aa). A coiled-coil region spans residues 31-75; sequence TVEDEIEVQQQVNSKLQARNNEMFAEIDDLRQGLDAIEERARHEL.

Belongs to the FtsB family. As to quaternary structure, part of a complex composed of FtsB, FtsL and FtsQ.

Its subcellular location is the cell inner membrane. Functionally, essential cell division protein. May link together the upstream cell division proteins, which are predominantly cytoplasmic, with the downstream cell division proteins, which are predominantly periplasmic. This Vibrio campbellii (strain ATCC BAA-1116) protein is Cell division protein FtsB.